Reading from the N-terminus, the 410-residue chain is UBX domain-containing protein 3 (410 aa).

2 disordered regions span residues 46 to 139 (EEDH…PDPK) and 154 to 212 (TISP…EKPL). Residues 65–85 (GSSSGISGGDQQPPRPLQRQQ) show a composition bias toward low complexity. Polar residues predominate over residues 86–97 (NTQGQGMKSGTA). Residues Ser-156, Ser-167, and Ser-186 each carry the phosphoserine modification. Low complexity predominate over residues 163 to 174 (SGPSSLASSWAS). The segment covering 183–196 (NEASGSTTPVTQSG) has biased composition (polar residues). A Phosphothreonine modification is found at Thr-190. In terms of domain architecture, SEP spans 211–276 (PLRRTLYFWR…VQHRMDEDYV (66 aa)). The region spanning 334 to 410 (ENKPTTRIQV…KNASLVQKSL (77 aa)) is the UBX domain.

In terms of assembly, interacts with cdc48.

Involved in CDC48-dependent protein degradation through the ubiquitin/proteasome pathway. Involved in delivery of substrates to the 26S proteasome. Also required for membrane fusion and sporulation. This Schizosaccharomyces pombe (strain 972 / ATCC 24843) (Fission yeast) protein is UBX domain-containing protein 3 (ubx3).